The following is a 475-amino-acid chain: Integrator complex subunit 15 (475 aa).

Positions 402-444 (YPHIHPGRPSPLSPHSPHQSTLSSPHSPHTVLTAHPTHPALAP) are disordered. Over residues 416 to 430 (HSPHQSTLSSPHSPH) the composition is skewed to low complexity.

The protein belongs to the Integrator subunit 15 family. As to quaternary structure, component of the Integrator complex, composed of core subunits INTS1, INTS2, INTS3, INTS4, INTS5, INTS6, INTS7, INTS8, INTS9/RC74, INTS10, INTS11/CPSF3L, INTS12, INTS13, INTS14 and INTS15. The core complex associates with protein phosphatase 2A subunits PPP2CA and PPP2R1A, to form the Integrator-PP2A (INTAC) complex. INTS15 is part of the tail subcomplex, composed of INTS10, INTS13, INTS14 and INTS15.

The protein resides in the nucleus. It localises to the chromosome. In terms of biological role, component of the integrator complex, a multiprotein complex that terminates RNA polymerase II (Pol II) transcription in the promoter-proximal region of genes. The integrator complex provides a quality checkpoint during transcription elongation by driving premature transcription termination of transcripts that are unfavorably configured for transcriptional elongation: the complex terminates transcription by (1) catalyzing dephosphorylation of the C-terminal domain (CTD) of Pol II subunit POLR2A/RPB1 and SUPT5H/SPT5, (2) degrading the exiting nascent RNA transcript via endonuclease activity and (3) promoting the release of Pol II from bound DNA. The integrator complex is also involved in terminating the synthesis of non-coding Pol II transcripts, such as enhancer RNAs (eRNAs), small nuclear RNAs (snRNAs), telomerase RNAs and long non-coding RNAs (lncRNAs). INTS15 is part of the integrator tail module that acts as a platform for the recruitment of transcription factors at promoters. Within the integrator complex, INTS15 is required to bridge different integrator modules. The protein is Integrator complex subunit 15 (ints15) of Danio rerio (Zebrafish).